The chain runs to 352 residues: Serine protease 55 (352 aa).

The first 18 residues, M1–L18, serve as a signal peptide directing secretion. The 233-residue stretch at I68 to Q300 folds into the Peptidase S1 domain. C93 and C109 are disulfide-bonded. Active-site charge relay system residues include H108 and D156. Disulfide bonds link C189-C256, C222-C235, and C246-C276. A glycan (N-linked (GlcNAc...) asparagine) is linked at N240. Residue S250 is the Charge relay system of the active site. The interval A308–P330 is disordered. Over residues P319 to P330 the composition is skewed to low complexity. A lipid anchor (GPI-anchor amidated serine) is attached at S325. Positions G326–Y352 are cleaved as a propeptide — removed in mature form.

Belongs to the peptidase S1 family. In terms of tissue distribution, only detected in testis. Expressed in spermatogonia, spermatocytes, spermatids, Leydig and Sertoli cells. Expressed in prostate cancer and ovarian cancer (at protein level).

It is found in the cell membrane. Its subcellular location is the cytoplasm. The protein resides in the cytosol. Functionally, probable serine protease, which plays a crucial role in the fertility of male mice including sperm migration and sperm-egg interaction. In Homo sapiens (Human), this protein is Serine protease 55 (PRSS55).